The chain runs to 772 residues: E3 ubiquitin-protein ligase UHRF1 (772 aa).

The region spanning 1–77 (MWIQVRTMDG…IVQLLVRQIP (77 aa)) is the Ubiquitin-like domain. Residues 90–111 (SDASAGCGSGQRDSDSGSGEGA) are disordered. 2 tudor-like regions span residues 129 to 205 (SLYK…LRAR) and 212 to 281 (EIKV…IEEP). Residues 291–299 (PQKRQNGPE) are linker. A PHD-type zinc finger spans residues 297–364 (GPECKHCKDN…DWYCPDCRND (68 aa)). Histone H3R2me0 binding stretches follow at residues 331–335 (CDECD) and 351–353 (PQD). The region spanning 417–580 (GPIPGVPVGT…FLVWRYLLRR (164 aa)) is the YDG domain. The required to promote base flipping stretch occupies residues 443–444 (HV). DNA is bound by residues 461–462 (AG) and Asp-467. 2 required for formation of a 5-methylcytosine-binding pocket regions span residues 464-467 (YEDD) and 476-479 (YTGS). Residues 615 to 626 (SKEREKENKTED) show a composition bias toward basic and acidic residues. The interval 615–649 (SKEREKENKTEDEPIDSPSKGKRKRNSDNEQTAAK) is disordered. The segment at 703-742 (CICCQEVVYEPVTTECHHNICKGCLDRSFKALVHSCPACR) adopts an RING-type zinc-finger fold.

The protein localises to the nucleus. It carries out the reaction S-ubiquitinyl-[E2 ubiquitin-conjugating enzyme]-L-cysteine + [acceptor protein]-L-lysine = [E2 ubiquitin-conjugating enzyme]-L-cysteine + N(6)-ubiquitinyl-[acceptor protein]-L-lysine.. The protein operates within protein modification; protein ubiquitination. Its function is as follows. Multidomain protein that acts as a key epigenetic regulator by bridging DNA methylation and chromatin modification. Specifically recognizes and binds hemimethylated DNA at replication forks via its YDG domain and recruits dnmt1 methyltransferase to ensure faithful propagation of the DNA methylation patterns through DNA replication. In addition to its role in maintenance of DNA methylation, also plays a key role in chromatin modification: through its tudor-like regions and PHD-type zinc fingers, specifically recognizes and binds histone H3 trimethylated at 'Lys-9' (H3K9me3) and unmethylated at 'Arg-2' (H3R2me0), respectively, and recruits chromatin proteins. Enriched in pericentric heterochromatin where it recruits different chromatin modifiers required for this chromatin replication. Also localizes to euchromatic regions where it negatively regulates transcription possibly by impacting DNA methylation and histone modifications. Has E3 ubiquitin-protein ligase activity by mediating the ubiquitination of target proteins. However, it is still unclear how E3 ubiquitin-protein ligase activity is related to its role in chromatin in vivo. The protein is E3 ubiquitin-protein ligase UHRF1 (uhrf1) of Xenopus laevis (African clawed frog).